The chain runs to 760 residues: Alpha-amylase (760 aa).

A signal peptide spans 1-34; sequence MSKRSKLLKRRMLSLSVICVLIGYGPVFNPVRSQ. Residues Asn143, Thr184, and Asp192 each contribute to the Ca(2+) site. Asp222 (nucleophile) is an active-site residue. His226 contributes to the Ca(2+) binding site. The active-site Proton donor is Glu262.

This sequence belongs to the glycosyl hydrolase 13 family. As to quaternary structure, monomer. Ca(2+) is required as a cofactor.

It catalyses the reaction Endohydrolysis of (1-&gt;4)-alpha-D-glucosidic linkages in polysaccharides containing three or more (1-&gt;4)-alpha-linked D-glucose units.. The polypeptide is Alpha-amylase (amyA) (Clostridium acetobutylicum (strain ATCC 824 / DSM 792 / JCM 1419 / IAM 19013 / LMG 5710 / NBRC 13948 / NRRL B-527 / VKM B-1787 / 2291 / W)).